The following is a 239-amino-acid chain: tRNA (guanine-N(7)-)-methyltransferase (239 aa).

The S-adenosyl-L-methionine site is built by Glu-69, Glu-94, Asp-121, and Asp-144. Asp-144 is a catalytic residue. Lys-148 contributes to the substrate binding site. Residues Arg-150 to Arg-155 are interaction with RNA. Substrate-binding positions include Asp-180 and Thr-217–Glu-220.

The protein belongs to the class I-like SAM-binding methyltransferase superfamily. TrmB family. In terms of assembly, monomer.

The catalysed reaction is guanosine(46) in tRNA + S-adenosyl-L-methionine = N(7)-methylguanosine(46) in tRNA + S-adenosyl-L-homocysteine. Its pathway is tRNA modification; N(7)-methylguanine-tRNA biosynthesis. Catalyzes the formation of N(7)-methylguanine at position 46 (m7G46) in tRNA. The sequence is that of tRNA (guanine-N(7)-)-methyltransferase from Yersinia pseudotuberculosis serotype I (strain IP32953).